The chain runs to 416 residues: GTPase Obg (416 aa).

Residues 1-157 (MFQDVLVITV…RRLRLELMLI (157 aa)) enclose the Obg domain. 2 disordered regions span residues 25-44 (EKFV…GGSV) and 62-82 (TYKA…RGGE). Residues 32-42 (GPDGGDGGRGG) are compositionally biased toward gly residues. Over residues 63–72 (YKAEDGEHGR) the composition is skewed to basic and acidic residues. The region spanning 158 to 324 (ADVGLVGYPN…LKEALHALVR (167 aa)) is the OBG-type G domain. GTP-binding positions include 164–171 (GYPNAGKS), 189–193 (FTTLS), 211–214 (DIPG), 277–280 (NKVD), and 305–307 (SAL). Mg(2+) contacts are provided by Ser-171 and Thr-191. The region spanning 336–414 (PRKEVQAGVE…IGGLEFEYIP (79 aa)) is the OCT domain.

It belongs to the TRAFAC class OBG-HflX-like GTPase superfamily. OBG GTPase family. Monomer. Mg(2+) serves as cofactor.

It localises to the cytoplasm. In terms of biological role, an essential GTPase which binds GTP, GDP and possibly (p)ppGpp with moderate affinity, with high nucleotide exchange rates and a fairly low GTP hydrolysis rate. Plays a role in control of the cell cycle, stress response, ribosome biogenesis and in those bacteria that undergo differentiation, in morphogenesis control. The sequence is that of GTPase Obg from Thermus thermophilus (strain ATCC 27634 / DSM 579 / HB8).